The chain runs to 594 residues: RING finger protein 207 (594 aa).

An RING-type zinc finger spans residues 25-64; the sequence is CPLCHAQYERPCLLDCFHDFCAGCLRGRTADGRVACPLCQ. The B box-type; atypical zinc-finger motif lies at 93–145; the sequence is VEAVHCANCDLDCSKQDAETACFCNTCGQPLCARCRDETHRARMFARHDIVAL. The Zn(2+) site is built by C98, C101, C127, and H132. The segment at 369 to 400 is disordered; sequence NTLAGGSGPKVLMGPSCPSPVRKVSRSPVQKP. Residues 424 to 458 adopt a coiled-coil conformation; the sequence is CRHYEDSYRGLQAEVQNLKDQVQELHRDLTKHHSL. The disordered stretch occupies residues 552–594; it reads FQASADDESENPQTAYDASRNGETPASLLLPGSVASAEPPFVN. Residues 562-575 are compositionally biased toward polar residues; it reads NPQTAYDASRNGET.

As to quaternary structure, interacts with the core-glycosylated, but not the fully glycosylated form of KCNH2/HERG. Interacts with DNAJA1 and HSPA8. Interacts (via the C-terminus) with HSPA1A; this interaction additively increases KCNH2 expression.

Its subcellular location is the cytoplasm. Functionally, plays a role in cardiac repolarization possibly by stabilizing membrane expression of the potassium channel KCNH2/HERG, or by assisting its synthesis, folding or export from the endoplasmic reticulum, in a heat shock protein-dependent manner. This is RING finger protein 207 (RNF207) from Oryctolagus cuniculus (Rabbit).